The chain runs to 202 residues: MEAFTTHTGIGVPLRQSNVDTDQIIPAVYLKRITRTGFEDALFAAWRKDESFILNQAPFNAGSVLVAGPDFGTGSSREHAVWALKDYGFKAVLSSRFADIFRGNSGKQGLLAAQVAQDDIELIWKVLENHPGTEIKVDLVSKTVECGNVVAPFEIDDYTRWRLLEGLDDIGLTLQHEADITAYEATRPSFKPKTLPAKVQAQ.

This sequence belongs to the LeuD family. LeuD type 1 subfamily. As to quaternary structure, heterodimer of LeuC and LeuD.

It carries out the reaction (2R,3S)-3-isopropylmalate = (2S)-2-isopropylmalate. It participates in amino-acid biosynthesis; L-leucine biosynthesis; L-leucine from 3-methyl-2-oxobutanoate: step 2/4. Functionally, catalyzes the isomerization between 2-isopropylmalate and 3-isopropylmalate, via the formation of 2-isopropylmaleate. In Paenarthrobacter aurescens (strain TC1), this protein is 3-isopropylmalate dehydratase small subunit.